The sequence spans 234 residues: Orotidine 5'-phosphate decarboxylase (234 aa).

Substrate is bound by residues aspartate 11, lysine 33, 60-69, threonine 120, arginine 181, glutamine 190, glycine 210, and arginine 211; that span reads DLKFHDIPNT. Lysine 62 (proton donor) is an active-site residue.

It belongs to the OMP decarboxylase family. Type 1 subfamily. As to quaternary structure, homodimer.

It catalyses the reaction orotidine 5'-phosphate + H(+) = UMP + CO2. Its pathway is pyrimidine metabolism; UMP biosynthesis via de novo pathway; UMP from orotate: step 2/2. Functionally, catalyzes the decarboxylation of orotidine 5'-monophosphate (OMP) to uridine 5'-monophosphate (UMP). In Aliivibrio salmonicida (strain LFI1238) (Vibrio salmonicida (strain LFI1238)), this protein is Orotidine 5'-phosphate decarboxylase.